The primary structure comprises 424 residues: MLDIKKVRQNPEIVVEALKKRGANLNLDEFLRLDEERRKLLVDVEQKKYKRNTVSEEIGRLKKQGLPADDLILEMRALSDEIKKLDDEVAQIEEKLHAILLTIPNIPHESVPVGKDSSENVEVRRWGEPRKFTFTPKAHWEIGEELDILDFARGSKVTGARFTFYKGLGAMLERAVINFMLDLHTREHGYVEVFPPFIVNADSMMGTGQLPKFAEDMFKLEGLNYYLIPTAEVPVTNLYREEILDGDKLPIYHCAYSACFRAEAGAAGRDTRGLIRQHQFNKVELVKFVKPENSYEELEKLTRDAERVLQLLGLPYRVVVLCTGDLGFSAAKTYDIEVWLPSYNDYKEISSCSNFEDFQARRAKIRYKEHPKAKPEFVHTLNGSGLAVGRTVAAILENYQNEDGSVTVPEVLRPYMGVDRIYKK.

230 to 232 (TAE) contributes to the L-serine binding site. Residue 261-263 (RAE) coordinates ATP. Residue glutamate 284 participates in L-serine binding. 348–351 (EISS) provides a ligand contact to ATP. Serine 384 serves as a coordination point for L-serine.

This sequence belongs to the class-II aminoacyl-tRNA synthetase family. Type-1 seryl-tRNA synthetase subfamily. As to quaternary structure, homodimer. The tRNA molecule binds across the dimer.

Its subcellular location is the cytoplasm. It carries out the reaction tRNA(Ser) + L-serine + ATP = L-seryl-tRNA(Ser) + AMP + diphosphate + H(+). The catalysed reaction is tRNA(Sec) + L-serine + ATP = L-seryl-tRNA(Sec) + AMP + diphosphate + H(+). It participates in aminoacyl-tRNA biosynthesis; selenocysteinyl-tRNA(Sec) biosynthesis; L-seryl-tRNA(Sec) from L-serine and tRNA(Sec): step 1/1. In terms of biological role, catalyzes the attachment of serine to tRNA(Ser). Is also able to aminoacylate tRNA(Sec) with serine, to form the misacylated tRNA L-seryl-tRNA(Sec), which will be further converted into selenocysteinyl-tRNA(Sec). The protein is Serine--tRNA ligase of Carboxydothermus hydrogenoformans (strain ATCC BAA-161 / DSM 6008 / Z-2901).